The primary structure comprises 286 residues: ATP phosphoribosyltransferase (286 aa).

It belongs to the ATP phosphoribosyltransferase family. Long subfamily. Requires Mg(2+) as cofactor.

Its subcellular location is the cytoplasm. It catalyses the reaction 1-(5-phospho-beta-D-ribosyl)-ATP + diphosphate = 5-phospho-alpha-D-ribose 1-diphosphate + ATP. The protein operates within amino-acid biosynthesis; L-histidine biosynthesis; L-histidine from 5-phospho-alpha-D-ribose 1-diphosphate: step 1/9. With respect to regulation, feedback inhibited by histidine. Functionally, catalyzes the condensation of ATP and 5-phosphoribose 1-diphosphate to form N'-(5'-phosphoribosyl)-ATP (PR-ATP). Has a crucial role in the pathway because the rate of histidine biosynthesis seems to be controlled primarily by regulation of HisG enzymatic activity. The protein is ATP phosphoribosyltransferase of Paenarthrobacter aurescens (strain TC1).